The chain runs to 1150 residues: ATP-dependent helicase/deoxyribonuclease subunit B (1150 aa).

8–15 (GRSGSGKS) serves as a coordination point for ATP. Cys789, Cys1108, Cys1111, and Cys1117 together coordinate [4Fe-4S] cluster.

It belongs to the helicase family. AddB/RexB type 1 subfamily. As to quaternary structure, heterodimer of AddA and AddB. It depends on Mg(2+) as a cofactor. The cofactor is [4Fe-4S] cluster.

The heterodimer acts as both an ATP-dependent DNA helicase and an ATP-dependent, dual-direction single-stranded exonuclease. Recognizes the chi site generating a DNA molecule suitable for the initiation of homologous recombination. The AddB subunit has 5' -&gt; 3' nuclease activity but not helicase activity. The protein is ATP-dependent helicase/deoxyribonuclease subunit B of Clostridium tetani (strain Massachusetts / E88).